A 333-amino-acid chain; its full sequence is 2-haloacrylate reductase (333 aa).

NADP(+) is bound at residue 153 to 159; the sequence is AAAGGMG.

This sequence belongs to the zinc-containing alcohol dehydrogenase family.

It carries out the reaction (S)-2-chloropropanoate + NADP(+) = 2-chloroacrylate + NADPH + H(+). Its function is as follows. Involved in the degradation of unsaturated organohalogen compounds. Catalyzes the NADPH-dependent reduction of the carbon-carbon double bond of 2-chloroacrylate to produce (S)-2-chloropropionate, which is probably further metabolized to (R)-lactate by (S)-2-haloacid dehalogenase. Can also use 2-bromoacrylate as substrate. Does not act on acrylate, methacrylate, 1,4-benzoquinone and 1,4-naphthoquinone. This Burkholderia sp protein is 2-haloacrylate reductase.